The primary structure comprises 81 residues: Sulfur carrier protein TusA (81 aa).

The active-site Cysteine persulfide intermediate is the Cys-19.

The protein belongs to the sulfur carrier protein TusA family.

It is found in the cytoplasm. Its function is as follows. Sulfur carrier protein which probably makes part of a sulfur-relay system. The sequence is that of Sulfur carrier protein TusA from Shewanella woodyi (strain ATCC 51908 / MS32).